Reading from the N-terminus, the 149-residue chain is Deoxyuridine 5'-triphosphate nucleotidohydrolase (149 aa).

Substrate is bound by residues 65-67 (RSG), N78, 82-84 (TID), and K92.

The protein belongs to the dUTPase family. It depends on Mg(2+) as a cofactor.

The enzyme catalyses dUTP + H2O = dUMP + diphosphate + H(+). Its pathway is pyrimidine metabolism; dUMP biosynthesis; dUMP from dCTP (dUTP route): step 2/2. This enzyme is involved in nucleotide metabolism: it produces dUMP, the immediate precursor of thymidine nucleotides and it decreases the intracellular concentration of dUTP so that uracil cannot be incorporated into DNA. This chain is Deoxyuridine 5'-triphosphate nucleotidohydrolase, found in Chlorobium chlorochromatii (strain CaD3).